The primary structure comprises 102 residues: Small ribosomal subunit protein uS10 (102 aa).

The protein belongs to the universal ribosomal protein uS10 family. As to quaternary structure, part of the 30S ribosomal subunit.

Functionally, involved in the binding of tRNA to the ribosomes. In Tropheryma whipplei (strain TW08/27) (Whipple's bacillus), this protein is Small ribosomal subunit protein uS10.